Reading from the N-terminus, the 136-residue chain is Protein NrdI (136 aa).

The protein belongs to the NrdI family.

Probably involved in ribonucleotide reductase function. The polypeptide is Protein NrdI (Escherichia coli O7:K1 (strain IAI39 / ExPEC)).